A 108-amino-acid chain; its full sequence is Peptidyl-prolyl cis-trans isomerase FKBP1B (108 aa).

The PPIase FKBP-type domain occupies 20 to 108 (GQICVVHYTG…IFDVELLNLE (89 aa)).

Belongs to the FKBP-type PPIase family. FKBP1 subfamily. As to quaternary structure, identified in a complex composed of RYR2, FKBP1B, PKA catalytic subunit, PRKAR2A, AKAP6, and the protein phosphatases PP2A and PP1. Interacts directly with RYR2. As to expression, detected in heart muscle (at protein level). Ubiquitous.

It localises to the cytoplasm. It is found in the sarcoplasmic reticulum. It carries out the reaction [protein]-peptidylproline (omega=180) = [protein]-peptidylproline (omega=0). Its activity is regulated as follows. Inhibited by both FK506 and rapamycin. Functionally, has the potential to contribute to the immunosuppressive and toxic effects of FK506 and rapamycin. PPIases accelerate the folding of proteins. It catalyzes the cis-trans isomerization of proline imidic peptide bonds in oligopeptides. In Rattus norvegicus (Rat), this protein is Peptidyl-prolyl cis-trans isomerase FKBP1B (Fkbp1b).